The following is a 381-amino-acid chain: Metallophosphoesterase 1 (381 aa).

Residues 15-35 (LIFAFVSVFVFCEYVIYYLVI) traverse the membrane as a helical segment. Positions 59, 101, 139, 234, 288, and 290 each coordinate a divalent metal cation. Residues 341-361 (TVLVVYCSSCLIIALITLIHL) traverse the membrane as a helical segment. A Di-lysine motif motif is present at residues 377 to 381 (KHKTL).

It belongs to the metallophosphoesterase superfamily. MPPE1 family. Requires Mn(2+) as cofactor.

Its subcellular location is the endoplasmic reticulum-Golgi intermediate compartment membrane. Functionally, metallophosphoesterase that catalyzes the removal of a side-chain ethanolamine-phosphate (EtNP) from the second mannose of the GPI-anchor protein intermediate. Participates in the glycan remodeling steps of GPI-anchor maturation to allow an efficient transport of GPI-anchor proteins from the endoplasmic reticulum to the Golgi. The chain is Metallophosphoesterase 1 from Danio rerio (Zebrafish).